Here is a 182-residue protein sequence, read N- to C-terminus: uncharacterized protein (182 aa).

4 helical membrane passes run 19–39 (LFGIIPIKFIVSFLQLVSIVS), 51–71 (IYLVLLSVGIVLNVFTVVVFI), 87–107 (IFTVVPFIYAVYTFISFIELF), and 118–138 (CSPFAYAFIFLCIYIFYLAMC).

It localises to the membrane. This is an uncharacterized protein from Caenorhabditis elegans.